We begin with the raw amino-acid sequence, 306 residues long: Ornithine carbamoyltransferase (306 aa).

Carbamoyl phosphate is bound by residues 53–56 (STRT), Gln-80, Arg-104, and 131–134 (HPCQ). Residues Asn-162, Asp-220, and 224–225 (SM) contribute to the L-ornithine site. Carbamoyl phosphate is bound by residues 260 to 261 (CL) and Arg-288.

It belongs to the aspartate/ornithine carbamoyltransferase superfamily. OTCase family.

The protein resides in the cytoplasm. The enzyme catalyses carbamoyl phosphate + L-ornithine = L-citrulline + phosphate + H(+). Its pathway is amino-acid biosynthesis; L-arginine biosynthesis; L-arginine from L-ornithine and carbamoyl phosphate: step 1/3. Functionally, reversibly catalyzes the transfer of the carbamoyl group from carbamoyl phosphate (CP) to the N(epsilon) atom of ornithine (ORN) to produce L-citrulline. This Dechloromonas aromatica (strain RCB) protein is Ornithine carbamoyltransferase.